The chain runs to 888 residues: Tyrosine-protein kinase receptor UFO (888 aa).

Residues methionine 1–alanine 18 form the signal peptide. The interaction with GAS6 stretch occupies residues alanine 19–tryptophan 86. The Extracellular segment spans residues alanine 19–tryptophan 445. 2 consecutive Ig-like C2-type domains span residues proline 30 to serine 122 and proline 133 to threonine 216. A glycan (N-linked (GlcNAc...) asparagine) is linked at asparagine 37. Residues cysteine 50 and cysteine 111 are joined by a disulfide bond. Residues asparagine 151 and asparagine 192 are each glycosylated (N-linked (GlcNAc...) asparagine). Cysteines 154 and 199 form a disulfide. Fibronectin type-III domains follow at residues arginine 221–glycine 325 and proline 330–proline 422. N-linked (GlcNAc...) asparagine glycans are attached at residues asparagine 333, asparagine 339, and asparagine 395. The helical transmembrane segment at tyrosine 446 to valine 466 threads the bilayer. The Cytoplasmic portion of the chain corresponds to histidine 467–alanine 888. One can recognise a Protein kinase domain in the interval valine 530 to leucine 801. ATP-binding positions include leucine 536–valine 544 and lysine 561. Aspartate 666 (proton acceptor) is an active-site residue. Phosphotyrosine; by autocatalysis is present on residues tyrosine 697, tyrosine 773, and tyrosine 815. Residues glutamate 820–cysteine 846 form a disordered region. Tyrosine 860 is modified (phosphotyrosine; by autocatalysis). The disordered stretch occupies residues serine 865–alanine 888.

Belongs to the protein kinase superfamily. Tyr protein kinase family. AXL/UFO subfamily. Heterodimer and heterotetramer with ligand GAS6. Interacts with CBL, GRB2, LCK, NCK2, PIK3R1, PIK3R2, PIK3R3, PLCG1, SOCS1 and TNS2. Part of a complex including AXL, TNK2 and GRB2, in which GRB2 promotes AXL recruitment by TNK2. In terms of processing, monoubiquitinated upon GAS6-binding. A very small proportion of the receptor could be subjected to polyubiquitination in a very transient fashion. Post-translationally, phosphorylated at tyrosine residues by autocatalysis, which activates kinase activity. As to expression, in distinct substructures of a broad spectrum of developing tissues (in the late embryogenesis). In cells forming organ capsules as well as in connective tissue structures (in adult).

It localises to the cell membrane. It carries out the reaction L-tyrosyl-[protein] + ATP = O-phospho-L-tyrosyl-[protein] + ADP + H(+). Its activity is regulated as follows. Activated by GAS6-binding and subsequent autophosphorylation. Functionally, receptor tyrosine kinase that transduces signals from the extracellular matrix into the cytoplasm by binding growth factor GAS6 and which is thus regulating many physiological processes including cell survival, cell proliferation, migration and differentiation. Ligand binding at the cell surface induces dimerization and autophosphorylation of AXL. Following activation by ligand, AXL binds and induces tyrosine phosphorylation of PI3-kinase subunits PIK3R1, PIK3R2 and PIK3R3; but also GRB2, PLCG1, LCK and PTPN11. Other downstream substrate candidates for AXL are CBL, NCK2, SOCS1 and TNS2. Recruitment of GRB2 and phosphatidylinositol 3 kinase regulatory subunits by AXL leads to the downstream activation of the AKT kinase. GAS6/AXL signaling plays a role in various processes such as endothelial cell survival during acidification by preventing apoptosis, optimal cytokine signaling during human natural killer cell development, hepatic regeneration, gonadotropin-releasing hormone neuron survival and migration, platelet activation, or regulation of thrombotic responses. Also plays an important role in inhibition of Toll-like receptors (TLRs)-mediated innate immune response. The polypeptide is Tyrosine-protein kinase receptor UFO (Axl) (Mus musculus (Mouse)).